A 531-amino-acid chain; its full sequence is Light-independent protochlorophyllide reductase subunit B (531 aa).

D36 is a [4Fe-4S] cluster binding site. D296 serves as the catalytic Proton donor. 431–432 (GM) is a binding site for substrate.

The protein belongs to the ChlB/BchB/BchZ family. Protochlorophyllide reductase is composed of three subunits; ChlL, ChlN and ChlB. Forms a heterotetramer of two ChlB and two ChlN subunits. Requires [4Fe-4S] cluster as cofactor.

The protein resides in the plastid. The protein localises to the chloroplast. The enzyme catalyses chlorophyllide a + oxidized 2[4Fe-4S]-[ferredoxin] + 2 ADP + 2 phosphate = protochlorophyllide a + reduced 2[4Fe-4S]-[ferredoxin] + 2 ATP + 2 H2O. The protein operates within porphyrin-containing compound metabolism; chlorophyll biosynthesis (light-independent). Functionally, component of the dark-operative protochlorophyllide reductase (DPOR) that uses Mg-ATP and reduced ferredoxin to reduce ring D of protochlorophyllide (Pchlide) to form chlorophyllide a (Chlide). This reaction is light-independent. The NB-protein (ChlN-ChlB) is the catalytic component of the complex. The protein is Light-independent protochlorophyllide reductase subunit B of Nephroselmis olivacea (Green alga).